Consider the following 141-residue polypeptide: Large ribosomal subunit protein uL11 (141 aa).

The protein belongs to the universal ribosomal protein uL11 family. In terms of assembly, part of the ribosomal stalk of the 50S ribosomal subunit. Interacts with L10 and the large rRNA to form the base of the stalk. L10 forms an elongated spine to which L12 dimers bind in a sequential fashion forming a multimeric L10(L12)X complex. In terms of processing, one or more lysine residues are methylated.

In terms of biological role, forms part of the ribosomal stalk which helps the ribosome interact with GTP-bound translation factors. The polypeptide is Large ribosomal subunit protein uL11 (Streptococcus equi subsp. equi (strain 4047)).